The sequence spans 327 residues: GMP reductase (327 aa).

The active-site Thioimidate intermediate is Cys-176. 205–228 (IIADGGIRTHGDIAKSIRFGASMV) is an NADP(+) binding site.

It belongs to the IMPDH/GMPR family. GuaC type 2 subfamily.

It catalyses the reaction IMP + NH4(+) + NADP(+) = GMP + NADPH + 2 H(+). In terms of biological role, catalyzes the irreversible NADPH-dependent deamination of GMP to IMP. It functions in the conversion of nucleobase, nucleoside and nucleotide derivatives of G to A nucleotides, and in maintaining the intracellular balance of A and G nucleotides. This is GMP reductase from Streptococcus gordonii (strain Challis / ATCC 35105 / BCRC 15272 / CH1 / DL1 / V288).